The primary structure comprises 596 residues: Elongation factor 4 (596 aa).

The tr-type G domain maps to 2-184; sequence KHIRNFSIIA…VIVEQIPPPE (183 aa). Residues 14 to 19 and 131 to 134 contribute to the GTP site; these read DHGKST and NKID.

The protein belongs to the TRAFAC class translation factor GTPase superfamily. Classic translation factor GTPase family. LepA subfamily.

It is found in the cell inner membrane. It catalyses the reaction GTP + H2O = GDP + phosphate + H(+). Functionally, required for accurate and efficient protein synthesis under certain stress conditions. May act as a fidelity factor of the translation reaction, by catalyzing a one-codon backward translocation of tRNAs on improperly translocated ribosomes. Back-translocation proceeds from a post-translocation (POST) complex to a pre-translocation (PRE) complex, thus giving elongation factor G a second chance to translocate the tRNAs correctly. Binds to ribosomes in a GTP-dependent manner. This chain is Elongation factor 4, found in Shewanella pealeana (strain ATCC 700345 / ANG-SQ1).